The sequence spans 92 residues: Probable Fe(2+)-trafficking protein (92 aa).

It belongs to the Fe(2+)-trafficking protein family.

Could be a mediator in iron transactions between iron acquisition and iron-requiring processes, such as synthesis and/or repair of Fe-S clusters in biosynthetic enzymes. The chain is Probable Fe(2+)-trafficking protein from Anaeromyxobacter sp. (strain Fw109-5).